A 198-amino-acid polypeptide reads, in one-letter code: Recombination protein RecR (198 aa).

A C4-type zinc finger spans residues 56-71 (CEICGNVSEQATCSIC). The Toprim domain maps to 79-174 (ALICVVEEAK…RVTRLASGLP (96 aa)).

The protein belongs to the RecR family.

Functionally, may play a role in DNA repair. It seems to be involved in an RecBC-independent recombinational process of DNA repair. It may act with RecF and RecO. The sequence is that of Recombination protein RecR from Leifsonia xyli subsp. xyli (strain CTCB07).